We begin with the raw amino-acid sequence, 394 residues long: Actin-related protein 2 (394 aa).

Residues 160–162, 214–218, and 305–310 contribute to the ATP site; these read GDG, RMIKE, and GGSTMY.

It belongs to the actin family. ARP2 subfamily. As to quaternary structure, component of the Arp2/3 complex composed of ACTR2/ARP2, ACTR3/ARP3, ARPC1B/p41-ARC, ARPC2/p34-ARC, ARPC3/p21-ARC, ARPC4/p20-ARC and ARPC5/p16-ARC.

It is found in the cytoplasm. Its subcellular location is the cytoskeleton. It localises to the cell projection. The protein resides in the nucleus. Functionally, ATP-binding component of the Arp2/3 complex, a multiprotein complex that mediates actin polymerization upon stimulation by nucleation-promoting factor (NPF). The Arp2/3 complex mediates the formation of branched actin networks in the cytoplasm, providing the force for cell motility. Seems to contact the pointed end of the daughter actin filament. In addition to its role in the cytoplasmic cytoskeleton, the Arp2/3 complex also promotes actin polymerization in the nucleus, thereby regulating gene transcription and repair of damaged DNA. The Arp2/3 complex promotes homologous recombination (HR) repair in response to DNA damage by promoting nuclear actin polymerization, leading to drive motility of double-strand breaks (DSBs). In Gallus gallus (Chicken), this protein is Actin-related protein 2 (ACTR2).